A 309-amino-acid chain; its full sequence is Ribosomal RNA small subunit methyltransferase H (309 aa).

S-adenosyl-L-methionine contacts are provided by residues 39–41 (GGH), Asp-59, Phe-83, Asp-100, and Gln-107.

This sequence belongs to the methyltransferase superfamily. RsmH family.

Its subcellular location is the cytoplasm. It catalyses the reaction cytidine(1402) in 16S rRNA + S-adenosyl-L-methionine = N(4)-methylcytidine(1402) in 16S rRNA + S-adenosyl-L-homocysteine + H(+). Specifically methylates the N4 position of cytidine in position 1402 (C1402) of 16S rRNA. The polypeptide is Ribosomal RNA small subunit methyltransferase H (Delftia acidovorans (strain DSM 14801 / SPH-1)).